We begin with the raw amino-acid sequence, 164 residues long: Large ribosomal subunit protein uL11 (164 aa).

Belongs to the universal ribosomal protein uL11 family. Part of the ribosomal stalk of the 50S ribosomal subunit. Interacts with L10 and the large rRNA to form the base of the stalk. L10 forms an elongated spine to which L12 dimers bind in a sequential fashion forming a multimeric L10(L12)X complex.

In terms of biological role, forms part of the ribosomal stalk which helps the ribosome interact with GTP-bound translation factors. In Pyrococcus horikoshii (strain ATCC 700860 / DSM 12428 / JCM 9974 / NBRC 100139 / OT-3), this protein is Large ribosomal subunit protein uL11.